Consider the following 1141-residue polypeptide: Serine-aspartate repeat-containing protein E (1141 aa).

The N-terminal stretch at 1–52 (MINRDNKKAITKKGMISNRLNKFSIRKYTVGTASILVGTTLIFGLGNQEAKA) is a signal peptide. The YSIRK-G/S signaling motif signature appears at 23 to 34 (FSIRKYTVGTAS). The segment at 53 to 601 (AENTSTENAK…GDGTVKPEEK (549 aa)) is ligand binding A region. The segment at 54 to 248 (ENTSTENAKQ…RSTKPVATAP (195 aa)) is disordered. Basic and acidic residues predominate over residues 61 to 75 (AKQDDATTSDNKEVV). The segment covering 77–90 (ETENNSTTENDSTN) has biased composition (low complexity). A compositionally biased stretch (basic and acidic residues) spans 92 to 108 (IKKETNTDSQPEAKEES). The segment covering 109–126 (TTSSTQQQQNNVTATTET) has biased composition (low complexity). Residues 130-145 (NIEKENVKPSTDKTAT) show a composition bias toward basic and acidic residues. A compositionally biased stretch (polar residues) spans 159-207 (NYTNNDVTTKPSTSEIQTKPTTPQESTNIENSQPQPTPSKVDNQVTDAT). Over residues 216–241 (SKEELKNNPEKLKELVRNDNNTDRST) the composition is skewed to basic and acidic residues. CNA-B domains lie at 602–714 (LYKI…YKEP), 715–824 (KYNL…YKTP), and 825–935 (KYSL…EEDT). The disordered stretch occupies residues 899–1117 (VTNTTEDDKD…GSENNGSNNA (219 aa)). Acidic residues-rich tracts occupy residues 903-913 (TEDDKDADGGE) and 930-1080 (YFEE…DSDS). Residues 1104–1108 (LPETG) carry the LPXTG sorting signal motif. Thr1107 carries the post-translational modification Pentaglycyl murein peptidoglycan amidated threonine. The propeptide at 1108-1141 (GSENNGSNNATLFGGLFAALGSLLLFGRRKKQNK) is removed by sortase.

The protein belongs to the serine-aspartate repeat-containing protein (SDr) family. In terms of assembly, interacts with host complement factor H/CFAH (via C-terminus). Interacts with host complement regulator C4BPA.

The protein resides in the secreted. Its subcellular location is the cell wall. Functionally, cell surface-associated calcium-binding protein which plays an important role in adhesion and pathogenesis. Contributes to the resistance to killing by innate immune components in blood and thus attenuates bacterial clearance by interacting with host complement factor H/CFAH and modulating its activity. Also inhibits bacterial opsonization and killing by interacting with host complement regulator C4BPA and thus inhibiting classical complement pathway activation. The protein is Serine-aspartate repeat-containing protein E (sdrE) of Staphylococcus aureus (strain N315).